Here is a 221-residue protein sequence, read N- to C-terminus: Adenylate kinase (221 aa).

10–15 (GAGKGT) contacts ATP. The tract at residues 30-59 (STGDMLRAAVKAGTEFGVAAKKIMDAGGLV) is NMP. Residues T31, R36, 57 to 59 (GLV), 85 to 88 (GFPR), and Q92 contribute to the AMP site. The LID stretch occupies residues 122-159 (GRRVHPASGRTYHIKYNPPKVEGKDDVTGDALIQRDDD). ATP-binding positions include R123 and 132 to 133 (TY). 2 residues coordinate AMP: R156 and R167. ATP is bound at residue G207.

It belongs to the adenylate kinase family. Monomer.

It localises to the cytoplasm. The enzyme catalyses AMP + ATP = 2 ADP. Its pathway is purine metabolism; AMP biosynthesis via salvage pathway; AMP from ADP: step 1/1. Its function is as follows. Catalyzes the reversible transfer of the terminal phosphate group between ATP and AMP. Plays an important role in cellular energy homeostasis and in adenine nucleotide metabolism. The chain is Adenylate kinase from Polynucleobacter asymbioticus (strain DSM 18221 / CIP 109841 / QLW-P1DMWA-1) (Polynucleobacter necessarius subsp. asymbioticus).